The chain runs to 521 residues: GMP synthase [glutamine-hydrolyzing] (521 aa).

The Glutamine amidotransferase type-1 domain maps to 8-203 (KILILDFGAQ…VVDVCGCQTL (196 aa)). C85 serves as the catalytic Nucleophile. Active-site residues include H177 and E179. Positions 204 to 396 (WTAANIIEDQ…LGLPRTMVYR (193 aa)) constitute a GMPS ATP-PPase domain. 231–237 (SGGVDSS) lines the ATP pocket.

In terms of assembly, homodimer.

The enzyme catalyses XMP + L-glutamine + ATP + H2O = GMP + L-glutamate + AMP + diphosphate + 2 H(+). Its pathway is purine metabolism; GMP biosynthesis; GMP from XMP (L-Gln route): step 1/1. Its function is as follows. Catalyzes the synthesis of GMP from XMP. This chain is GMP synthase [glutamine-hydrolyzing], found in Xanthomonas axonopodis pv. citri (strain 306).